Reading from the N-terminus, the 310-residue chain is N-acyl-aromatic-L-amino acid amidohydrolase (carboxylate-forming) (310 aa).

2 residues coordinate Zn(2+): His20 and Glu23. Substrate contacts are provided by residues Arg62 and 69-70 (NR). Zn(2+) is bound at residue His113. Positions 176 and 286 each coordinate substrate.

Belongs to the AspA/AstE family. Aspartoacylase subfamily. Homotetramer. Requires Zn(2+) as cofactor.

Its subcellular location is the apical cell membrane. The protein resides in the cytoplasm. The catalysed reaction is an N-acyl-aromatic L-alpha-amino acid + H2O = an aromatic L-alpha-amino acid + a carboxylate. It carries out the reaction an N-acetyl-L-cysteine-S-conjugate + H2O = an S-substituted L-cysteine + acetate. Its function is as follows. Plays an important role in deacetylating mercapturic acids in kidney proximal tubules. This is N-acyl-aromatic-L-amino acid amidohydrolase (carboxylate-forming) (acy3) from Xenopus tropicalis (Western clawed frog).